The chain runs to 125 residues: Protein ApaG (125 aa).

Residues 3-125 (TAVTEGIEVT…FPLVVPGTLN (123 aa)) form the ApaG domain.

The polypeptide is Protein ApaG (Anaeromyxobacter sp. (strain K)).